A 1963-amino-acid chain; its full sequence is Immunoglobulin A1 protease (1963 aa).

The first 36 residues, Met-1–Ala-36, serve as a signal peptide directing secretion. Positions Ser-37 to Thr-99 are excised as a propeptide. Positions Leu-96–Gly-100 match the LPXTG sorting signal motif. Position 99 is a pentaglycyl murein peptidoglycan amidated threonine (Thr-99). 2 consecutive transmembrane segments (helical) span residues Gln-106–Ser-125 and Lys-132–Leu-154. Residues Glu-155–Lys-1963 lie on the Extracellular side of the membrane. Residues Lys-253–Asp-305 form a disordered region. The segment covering Leu-276–Thr-296 has biased composition (basic and acidic residues). One can recognise a G5 domain in the interval Lys-314–Lys-393. The interval Glu-402–Glu-681 is disordered. Repeat copies occupy residues Ala-419–Pro-435, Glu-436–Thr-452, and Glu-453–Pro-469. The interval Ala-419–Pro-469 is 3 X 17 AA approximate tandem repeats. Positions Val-485–Glu-511 are enriched in basic and acidic residues. Composition is skewed to polar residues over residues Asn-516–Glu-529 and Glu-538–Glu-572. Positions Asn-574–Glu-591 are enriched in basic and acidic residues. Composition is skewed to polar residues over residues Glu-618–Pro-639 and Glu-648–Thr-674. Residue His-1604 participates in Zn(2+) binding. Residue Glu-1605 is part of the active site. Zn(2+)-binding residues include His-1608 and Glu-1628.

This sequence belongs to the peptidase M26 family. The cofactor is Zn(2+). In terms of processing, the Gram-positive cell-wall anchor motif LPXTG is located in the N-terminal part, in contrast to such motifs in other known streptococcal and staphylococcal proteins. The protease could be cleaved by the sortase and anchored in the membrane via the two potential N-terminal transmembrane domains, whereas the propeptide located prior to the LPXTG motif would remain attached to the cell wall peptidoglycan by an amide bond.

The protein resides in the secreted. It localises to the cell wall. It is found in the membrane. It catalyses the reaction Cleavage of Pro-|-Thr bond in the hinge region of the heavy chain of human IgA.. Zinc metalloproteinase which cleaves human immunoglobulin A1 (IgA1) in the hinge region. The protein is Immunoglobulin A1 protease (iga) of Streptococcus pneumoniae (strain ATCC BAA-255 / R6).